Reading from the N-terminus, the 841-residue chain is Tax1-binding protein 1 homolog (841 aa).

Coiled coils occupy residues 173 to 560 and 612 to 640; these read TTVL…EKAR and YSIE…KQAG. The interval 419-441 is disordered; it reads MRDEQQQKSNPFAKKDQGADNNR. Basic and acidic residues predominate over residues 431 to 441; the sequence is AKKDQGADNNR. The segment at 678–759 is disordered; sequence YASQETRDGA…NVNFEQTPDP (82 aa). Positions 741–751 are enriched in acidic residues; the sequence is DEDDDDDDDNV. 2 consecutive UBZ1-type zinc fingers follow at residues 779–805 and 806–832; these read NKKC…VESH and WKVC…VQTH. Cys-782, Cys-785, His-801, His-805, Cys-809, Cys-812, His-828, and His-832 together coordinate Zn(2+).

Its function is as follows. May have an anti-apoptotic activity. This Xenopus tropicalis (Western clawed frog) protein is Tax1-binding protein 1 homolog (tax1bp1).